The sequence spans 456 residues: Sensitive to high expression protein 9, mitochondrial (456 aa).

The N-terminal 30 residues, 1-30, are a transit peptide targeting the mitochondrion; the sequence is MLRYYGATRNLPLVFSINKLMLRASSFTRP. Over 31 to 296 the chain is Mitochondrial matrix; it reads FHYSSYSLQN…WSDKIRRTST (266 aa). 2 coiled-coil regions span residues 71 to 128 and 178 to 277; these read QHLK…KDEL and IQKL…YRAI. A helical transmembrane segment spans residues 297-317; it reads WGTFILMGMNIFLFIVLQLLL. Residues 318-435 are Mitochondrial intermembrane-facing; sequence EPWKRKRLVG…KLDAPLVFDT (118 aa). Residues 436 to 456 traverse the membrane as a helical segment; sequence LEFYLYSISLVSMTILVSGLI.

Belongs to the SHE9 family. As to quaternary structure, homooligomer. Participates in a complex of about 300 kDa.

It is found in the mitochondrion inner membrane. In terms of biological role, required for the maintenance of the structure of the mitochondrial inner membrane. Involved in mitochondrial morphology. Causes growth arrest when highly overexpressed. This chain is Sensitive to high expression protein 9, mitochondrial (SHE9), found in Saccharomyces cerevisiae (strain ATCC 204508 / S288c) (Baker's yeast).